We begin with the raw amino-acid sequence, 251 residues long: Hydroxyacylglutathione hydrolase (251 aa).

Residues His53, His55, Asp57, His58, His110, Asp127, and His165 each coordinate Zn(2+).

The protein belongs to the metallo-beta-lactamase superfamily. Glyoxalase II family. Monomer. Zn(2+) serves as cofactor.

It catalyses the reaction an S-(2-hydroxyacyl)glutathione + H2O = a 2-hydroxy carboxylate + glutathione + H(+). It participates in secondary metabolite metabolism; methylglyoxal degradation; (R)-lactate from methylglyoxal: step 2/2. Functionally, thiolesterase that catalyzes the hydrolysis of S-D-lactoyl-glutathione to form glutathione and D-lactic acid. The polypeptide is Hydroxyacylglutathione hydrolase (Enterobacter sp. (strain 638)).